Consider the following 102-residue polypeptide: MKIKNGDTVIVISGKDKGKTGNVIEVLAKKNKVVVEGVNIVTKHQKANGRGVESGLIKKEAPIDVSNVMYYDAKNKKGTRLGYKFEDGKKVRFMKSNNETIK.

It belongs to the universal ribosomal protein uL24 family. In terms of assembly, part of the 50S ribosomal subunit.

In terms of biological role, one of two assembly initiator proteins, it binds directly to the 5'-end of the 23S rRNA, where it nucleates assembly of the 50S subunit. Functionally, one of the proteins that surrounds the polypeptide exit tunnel on the outside of the subunit. This Finegoldia magna (strain ATCC 29328 / DSM 20472 / WAL 2508) (Peptostreptococcus magnus) protein is Large ribosomal subunit protein uL24.